The chain runs to 628 residues: Alpha-L-arabinofuranosidase A (628 aa).

Residues 1–25 (MVAFSALSGVSAVSLLLSLVQNAHG) form the signal peptide. N-linked (GlcNAc...) asparagine glycans are attached at residues Asn-36, Asn-51, Asn-74, Asn-152, Asn-171, Asn-260, Asn-359, Asn-440, Asn-493, and Asn-610.

The protein belongs to the glycosyl hydrolase 51 family.

The catalysed reaction is Hydrolysis of terminal non-reducing alpha-L-arabinofuranoside residues in alpha-L-arabinosides.. Its pathway is glycan metabolism; L-arabinan degradation. Its function is as follows. Acts only on small linear 1,5-alpha-linked L-arabinofuranosyl oligosaccharides. This chain is Alpha-L-arabinofuranosidase A (abfA), found in Aspergillus niger.